The primary structure comprises 519 residues: Mannosyl-oligosaccharide alpha-1,2-mannosidase (519 aa).

A signal peptide spans 1 to 22 (MKGSPVLAVCAAALTLIPSVVA). Residue Asn-187 is glycosylated (N-linked (GlcNAc...) asparagine). A disulfide bridge connects residues Cys-337 and Cys-366. The active-site Proton donor is Glu-380. The N-linked (GlcNAc...) asparagine glycan is linked to Asn-443. Thr-507 serves as a coordination point for Ca(2+).

The protein belongs to the glycosyl hydrolase 47 family. As to quaternary structure, monomer. The cofactor is Ca(2+). It depends on Mg(2+) as a cofactor.

It is found in the secreted. The catalysed reaction is N(4)-(alpha-D-Man-(1-&gt;2)-alpha-D-Man-(1-&gt;2)-alpha-D-Man-(1-&gt;3)-[alpha-D-Man-(1-&gt;2)-alpha-D-Man-(1-&gt;3)-[alpha-D-Man-(1-&gt;2)-alpha-D-Man-(1-&gt;6)]-alpha-D-Man-(1-&gt;6)]-beta-D-Man-(1-&gt;4)-beta-D-GlcNAc-(1-&gt;4)-beta-D-GlcNAc)-L-asparaginyl-[protein] (N-glucan mannose isomer 9A1,2,3B1,2,3) + 4 H2O = N(4)-(alpha-D-Man-(1-&gt;3)-[alpha-D-Man-(1-&gt;3)-[alpha-D-Man-(1-&gt;6)]-alpha-D-Man-(1-&gt;6)]-beta-D-Man-(1-&gt;4)-beta-D-GlcNAc-(1-&gt;4)-beta-D-GlcNAc)-L-asparaginyl-[protein] (N-glucan mannose isomer 5A1,2) + 4 beta-D-mannose. It catalyses the reaction N(4)-(alpha-D-Man-(1-&gt;2)-alpha-D-Man-(1-&gt;2)-alpha-D-Man-(1-&gt;3)-[alpha-D-Man-(1-&gt;3)-[alpha-D-Man-(1-&gt;2)-alpha-D-Man-(1-&gt;6)]-alpha-D-Man-(1-&gt;6)]-beta-D-Man-(1-&gt;4)-beta-D-GlcNAc-(1-&gt;4)-beta-D-GlcNAc)-L-asparaginyl-[protein] (N-glucan mannose isomer 8A1,2,3B1,3) + 3 H2O = N(4)-(alpha-D-Man-(1-&gt;3)-[alpha-D-Man-(1-&gt;3)-[alpha-D-Man-(1-&gt;6)]-alpha-D-Man-(1-&gt;6)]-beta-D-Man-(1-&gt;4)-beta-D-GlcNAc-(1-&gt;4)-beta-D-GlcNAc)-L-asparaginyl-[protein] (N-glucan mannose isomer 5A1,2) + 3 beta-D-mannose. The protein operates within protein modification; protein glycosylation. Functionally, alpha-mannosidase involved in the maturation of Asn-linked oligosaccharides. Progressively trims alpha-1,2-linked mannose residues from Man(9)GlcNAc(2) to produce Man(5)GlcNAc(2). This is Mannosyl-oligosaccharide alpha-1,2-mannosidase from Coccidioides posadasii (strain RMSCC 757 / Silveira) (Valley fever fungus).